Consider the following 452-residue polypeptide: Bifunctional protein GlmU (452 aa).

The segment at methionine 1 to arginine 225 is pyrophosphorylase. Residues leucine 6–glycine 9, lysine 20, glutamine 71, and glycine 76–threonine 77 each bind UDP-N-acetyl-alpha-D-glucosamine. Aspartate 99 provides a ligand contact to Mg(2+). UDP-N-acetyl-alpha-D-glucosamine contacts are provided by glycine 136, glutamate 151, asparagine 166, and asparagine 223. Asparagine 223 contacts Mg(2+). Residues alanine 226–lysine 246 form a linker region. The N-acetyltransferase stretch occupies residues glycine 247 to glutamine 452. The UDP-N-acetyl-alpha-D-glucosamine site is built by arginine 329 and lysine 347. Catalysis depends on histidine 359, which acts as the Proton acceptor. Residues tyrosine 362 and asparagine 373 each coordinate UDP-N-acetyl-alpha-D-glucosamine. Acetyl-CoA is bound by residues alanine 376, asparagine 382 to tyrosine 383, serine 401, alanine 419, and arginine 436.

It in the N-terminal section; belongs to the N-acetylglucosamine-1-phosphate uridyltransferase family. The protein in the C-terminal section; belongs to the transferase hexapeptide repeat family. As to quaternary structure, homotrimer. It depends on Mg(2+) as a cofactor.

The protein resides in the cytoplasm. The catalysed reaction is alpha-D-glucosamine 1-phosphate + acetyl-CoA = N-acetyl-alpha-D-glucosamine 1-phosphate + CoA + H(+). It catalyses the reaction N-acetyl-alpha-D-glucosamine 1-phosphate + UTP + H(+) = UDP-N-acetyl-alpha-D-glucosamine + diphosphate. The protein operates within nucleotide-sugar biosynthesis; UDP-N-acetyl-alpha-D-glucosamine biosynthesis; N-acetyl-alpha-D-glucosamine 1-phosphate from alpha-D-glucosamine 6-phosphate (route II): step 2/2. It functions in the pathway nucleotide-sugar biosynthesis; UDP-N-acetyl-alpha-D-glucosamine biosynthesis; UDP-N-acetyl-alpha-D-glucosamine from N-acetyl-alpha-D-glucosamine 1-phosphate: step 1/1. It participates in bacterial outer membrane biogenesis; LPS lipid A biosynthesis. Functionally, catalyzes the last two sequential reactions in the de novo biosynthetic pathway for UDP-N-acetylglucosamine (UDP-GlcNAc). The C-terminal domain catalyzes the transfer of acetyl group from acetyl coenzyme A to glucosamine-1-phosphate (GlcN-1-P) to produce N-acetylglucosamine-1-phosphate (GlcNAc-1-P), which is converted into UDP-GlcNAc by the transfer of uridine 5-monophosphate (from uridine 5-triphosphate), a reaction catalyzed by the N-terminal domain. The sequence is that of Bifunctional protein GlmU from Thermodesulfovibrio yellowstonii (strain ATCC 51303 / DSM 11347 / YP87).